The following is a 569-amino-acid chain: Adenine deaminase 1 (569 aa).

Belongs to the metallo-dependent hydrolases superfamily. Adenine deaminase family. Mn(2+) serves as cofactor.

It catalyses the reaction adenine + H2O + H(+) = hypoxanthine + NH4(+). The protein is Adenine deaminase 1 of Rhizobium johnstonii (strain DSM 114642 / LMG 32736 / 3841) (Rhizobium leguminosarum bv. viciae).